The primary structure comprises 367 residues: GPN-loop GTPase 1 (367 aa).

GTP is bound by residues 15-22 and 18-23; these read GMAGSGKT and GSGKTT. The Gly-Pro-Asn (GPN)-loop; involved in dimer interface motif lies at 75-77; sequence GPN. A GTP-binding site is contributed by 178–181; sequence NKCD. The stretch at 247–290 forms a coiled coil; the sequence is EGMDDFLEAVKAKVKEYEEEYVPEMERMKEIQRQTKERQKEAQL. Residues 306-332 are disordered; the sequence is VGLTVSDAEDEYNGELVDPDEDDGLTA. Position 311 is a phosphoserine (Ser-311). A compositionally biased stretch (acidic residues) spans 312 to 332; the sequence is DAEDEYNGELVDPDEDDGLTA.

Belongs to the GPN-loop GTPase family. Heterodimers with gpn2 or fet5/gpn3. Binds to RNA polymerase II (RNAPII).

The protein resides in the cytoplasm. In terms of biological role, small GTPase required for proper nuclear import of RNA polymerase II (RNAPII). May act at an RNAP assembly step prior to nuclear import. The chain is GPN-loop GTPase 1 from Schizosaccharomyces pombe (strain 972 / ATCC 24843) (Fission yeast).